The following is an 819-amino-acid chain: MTKPEIREPRAERYNPHAIEPKWQARWEQEGLYTFHEDPSKTKHYALTMFPYPSGNLHIGHWYANVAPDAHARWMRMRGYNVFFPMGFDAFGLPAENAAIKHGLNPATWTSSNIEHMLGQFKRMGTMIDWSRSLATCDPEYYRWNQWFFTEFFRRGLAYKKDGLVNWCPKDQTVLANEQVVDGRCERCGTPVERRNLSQWYLKITDYAEELLDFRDTDMPERVRAMQTNWIGKSVGAEITFDTPAGPETVFTTRPDTLMGATFLVLAPEHPKVPALTTPEQAEAVRAYVEAAGRKTDVERQQELGEKTGVFTGSYATHPVTGHQIPIWVADYVLMTYGTGSIMAVPAHDERDFDFARKFGLEIREVIRPEGGEPLDTTQAPYVGEGVIVNSGEFDGLPGGKASIAPIIARLEALGVAKPKTTYRLRDWLVSRQRYWGTPIPIVYCPDHGAQPVPADQLPVKLPENVEFMPTGQSPLKLDREWMRATCPVCGGPAERDTDTMDTFVDSSWYMYRYLSPHDDQHPFDPAHANLLPVDLYTGGIEHAILHLLYSRFWTKVMRDMGLTVQNEPFARLRNQGIILGEDGEKMSKSRGNVVDPDDLVREYGADTVRTYLMFIAPWELGGPWDPSGINGPAKWLSRVWALYFDEKAAGPEEKIGEADLRYAVHSTLKKVGADYERMSFNTIIAALMELTNTLVKAKRSPVFGTPAWEEALDIFNRMLAPVAPHIAEEIWRERGGTESVHLQAWPAVDEAAATRDTVTIGVQVSGKIRGEVQISKTATAEEALAAARAHPDVAKFTEGKQTIKEIYVPGRIINIVVK.

A 'HIGH' region motif is present at residues 51–61 (PYPSGNLHIGH). Positions 586–590 (KMSKS) match the 'KMSKS' region motif. Lys-589 contributes to the ATP binding site.

The protein belongs to the class-I aminoacyl-tRNA synthetase family.

Its subcellular location is the cytoplasm. It catalyses the reaction tRNA(Leu) + L-leucine + ATP = L-leucyl-tRNA(Leu) + AMP + diphosphate. The sequence is that of Leucine--tRNA ligase from Deinococcus geothermalis (strain DSM 11300 / CIP 105573 / AG-3a).